The following is a 204-amino-acid chain: Urease accessory protein UreG (204 aa).

12-19 (GPVGSGKT) is a GTP binding site.

Belongs to the SIMIBI class G3E GTPase family. UreG subfamily. In terms of assembly, homodimer. UreD, UreF and UreG form a complex that acts as a GTP-hydrolysis-dependent molecular chaperone, activating the urease apoprotein by helping to assemble the nickel containing metallocenter of UreC. The UreE protein probably delivers the nickel.

It localises to the cytoplasm. Functionally, facilitates the functional incorporation of the urease nickel metallocenter. This process requires GTP hydrolysis, probably effectuated by UreG. In Pseudomonas paraeruginosa (strain DSM 24068 / PA7) (Pseudomonas aeruginosa (strain PA7)), this protein is Urease accessory protein UreG.